Reading from the N-terminus, the 184-residue chain is NEDD8-conjugating enzyme Ubc12 (184 aa).

Residues 30-175 enclose the UBC core domain; sequence AGELRLHKDI…VRRAMTGGYV (146 aa). Cysteine 113 functions as the Glycyl thioester intermediate in the catalytic mechanism.

It belongs to the ubiquitin-conjugating enzyme family. UBC12 subfamily. As to quaternary structure, interacts with RBX1. Expressed in shoot, root and floral meristems, and in vascular tissues of leaves.

The protein operates within protein modification; protein neddylation. In terms of biological role, accepts the ubiquitin-like protein NEDD8/RUB1 from the ECR1-AXR1 E1 complex and catalyzes its covalent attachment to other proteins. In Arabidopsis thaliana (Mouse-ear cress), this protein is NEDD8-conjugating enzyme Ubc12 (RCE1).